Consider the following 908-residue polypeptide: Translation initiation factor IF-2 (908 aa).

The tract at residues 145 to 312 (EIPGLTQRAK…KGKKRQAEKI (168 aa)) is disordered. Residues 167-177 (VVERPEARPSA) are compositionally biased toward basic and acidic residues. 2 stretches are compositionally biased toward low complexity: residues 194-217 (RPEGGYRPAGPRPAGQRPEGPRPG) and 263-276 (VAGAGKKGPAGAAV). Basic and acidic residues predominate over residues 278–296 (KRKEEFKKTELFEKHERVF). The tr-type G domain maps to 408-577 (KRPPVVTIMG…LLQADVLELK (170 aa)). The segment at 417 to 424 (GHVDHGKT) is G1. 417–424 (GHVDHGKT) contacts GTP. A G2 region spans residues 442 to 446 (GITQH). The interval 463 to 466 (DTPG) is G3. GTP-binding positions include 463 to 467 (DTPGH) and 517 to 520 (NKID). The tract at residues 517–520 (NKID) is G4. The interval 553-555 (SAK) is G5.

Belongs to the TRAFAC class translation factor GTPase superfamily. Classic translation factor GTPase family. IF-2 subfamily.

Its subcellular location is the cytoplasm. Functionally, one of the essential components for the initiation of protein synthesis. Protects formylmethionyl-tRNA from spontaneous hydrolysis and promotes its binding to the 30S ribosomal subunits. Also involved in the hydrolysis of GTP during the formation of the 70S ribosomal complex. The protein is Translation initiation factor IF-2 of Geotalea daltonii (strain DSM 22248 / JCM 15807 / FRC-32) (Geobacter daltonii).